The sequence spans 372 residues: MATPVEPPNGIRTPGKHYYSMWQSLFEIDTKYVPIKPIGRGAYGIVCSSVNRETNEKVAIKKINNAFENRIDALRTLRELKLLRHLRHENVIALKDVMMPIHRRSFKDVYLVYELMDTDLHQIIKSSQTLSNDHCQYFLFQLLRGLKYLHSANILHRDLKPGNLLINANCDLKICDFGLARTSSGKDQFMTEYVVTRWYRAPELLLCCDNYGTSIDVWSVGCIFAELLGRKPVFPGTECLNQLKLIINILGSQREEDIEFIDNPKARKYIKSLPYSPGTPFSRLYPHAHPLAIDLLQRMLVFDPSKRISVIEALQHPYMSPLYDPNTDPPAQVPINLDIDEDLGEETIREMMWSEILEYHPEAATAAMEVVL.

One can recognise a Protein kinase domain in the interval 32-319 (YVPIKPIGRG…VIEALQHPYM (288 aa)). ATP is bound by residues 38-46 (IGRGAYGIV) and Lys61. Residue Asp158 is the Proton acceptor of the active site. Thr191 carries the phosphothreonine modification. A TXY motif is present at residues 191-193 (TEY). A Phosphotyrosine modification is found at Tyr193.

The protein belongs to the protein kinase superfamily. CMGC Ser/Thr protein kinase family. MAP kinase subfamily. The cofactor is Mg(2+). In terms of processing, dually phosphorylated on Thr-191 and Tyr-193, which activates the enzyme. Very low autophosphorylation, although dramatically increased when Mn(2+) is added to the reaction instead of Mg(2+). As to expression, ubiquitous.

The catalysed reaction is L-seryl-[protein] + ATP = O-phospho-L-seryl-[protein] + ADP + H(+). It catalyses the reaction L-threonyl-[protein] + ATP = O-phospho-L-threonyl-[protein] + ADP + H(+). With respect to regulation, activated by tyrosine and threonine phosphorylation. This is Mitogen-activated protein kinase homolog NTF3 (NTF3) from Nicotiana tabacum (Common tobacco).